The sequence spans 106 residues: Putative double-stranded DNA mimic protein VP1949 (106 aa).

The protein belongs to the putative dsDNA mimic protein family.

In terms of biological role, may act as a double-stranded DNA (dsDNA) mimic. Probably regulates the activity of a dsDNA-binding protein. This chain is Putative double-stranded DNA mimic protein VP1949, found in Vibrio parahaemolyticus serotype O3:K6 (strain RIMD 2210633).